The chain runs to 282 residues: Putative phosphatase in upp 3'region (282 aa).

Asp-17 serves as the catalytic Nucleophile. Asp-17 provides a ligand contact to Mg(2+). Leu-18 serves as a coordination point for phosphate. Position 19 (Asp-19) interacts with Mg(2+). Phosphate contacts are provided by residues 53-54 and Lys-211; that span reads TG. 2 residues coordinate Mg(2+): Asp-234 and Ser-235. Asn-237 lines the phosphate pocket.

It belongs to the HAD-like hydrolase superfamily. Cof family. The cofactor is Mg(2+).

In Metamycoplasma hominis (Mycoplasma hominis), this protein is Putative phosphatase in upp 3'region.